A 197-amino-acid polypeptide reads, in one-letter code: MVERKASVERNTLETQVKCSINLDGSGKARFDIGVPFLEHMLDQIARHGLIDLDIECKGDLHIDDHHTVEDVGITLGQAFAQAIGDKKGIFRYGHAYVPLDEALSRVVIDFSGRPGLQMHVPYTRATVGGFDVDLFQEFFQGFVNHALVTLHIDNLRGHNTHHQIETVFKAFGRALRMAVTQDERMAGQMPSTKGCL.

The protein belongs to the imidazoleglycerol-phosphate dehydratase family.

It is found in the cytoplasm. The enzyme catalyses D-erythro-1-(imidazol-4-yl)glycerol 3-phosphate = 3-(imidazol-4-yl)-2-oxopropyl phosphate + H2O. It participates in amino-acid biosynthesis; L-histidine biosynthesis; L-histidine from 5-phospho-alpha-D-ribose 1-diphosphate: step 6/9. In Pseudomonas putida (strain W619), this protein is Imidazoleglycerol-phosphate dehydratase.